The primary structure comprises 185 residues: Ribosome-recycling factor (185 aa).

It belongs to the RRF family.

The protein localises to the cytoplasm. Responsible for the release of ribosomes from messenger RNA at the termination of protein biosynthesis. May increase the efficiency of translation by recycling ribosomes from one round of translation to another. The sequence is that of Ribosome-recycling factor from Haemophilus influenzae (strain ATCC 51907 / DSM 11121 / KW20 / Rd).